A 979-amino-acid polypeptide reads, in one-letter code: Translation initiation factor IF-2 (979 aa).

The disordered stretch occupies residues valine 68–alanine 386. Basic and acidic residues-rich tracts occupy residues glutamine 102–glutamate 179, glutamate 217–arginine 229, and threonine 260–glycine 273. The span at arginine 317–serine 326 shows a compositional bias: polar residues. Basic and acidic residues predominate over residues aspartate 347–leucine 356. The region spanning alanine 478 to glutamate 646 is the tr-type G domain. The tract at residues glycine 487 to threonine 494 is G1. Glycine 487–threonine 494 is a GTP binding site. Residues glycine 512–histidine 516 form a G2 region. A G3 region spans residues aspartate 534–glycine 537. GTP contacts are provided by residues aspartate 534–histidine 538 and asparagine 588–aspartate 591. Residues asparagine 588–aspartate 591 form a G4 region. The segment at serine 624 to lysine 626 is G5.

The protein belongs to the TRAFAC class translation factor GTPase superfamily. Classic translation factor GTPase family. IF-2 subfamily.

The protein localises to the cytoplasm. Functionally, one of the essential components for the initiation of protein synthesis. Protects formylmethionyl-tRNA from spontaneous hydrolysis and promotes its binding to the 30S ribosomal subunits. Also involved in the hydrolysis of GTP during the formation of the 70S ribosomal complex. The protein is Translation initiation factor IF-2 of Porphyromonas gingivalis (strain ATCC BAA-308 / W83).